A 1363-amino-acid chain; its full sequence is Spike glycoprotein (1363 aa).

Residues Met-1–Phe-13 form the signal peptide. Residues Ala-14–Pro-1307 are Extracellular-facing. The BetaCoV S1-NTD domain occupies Val-15–Thr-298. Disulfide bonds link Cys-21/Cys-165, Cys-160/Cys-193, Cys-172/Cys-252, Cys-286/Cys-296, and Cys-331/Cys-356. Asn-59 and Asn-133 each carry an N-linked (GlcNAc...) asparagine; by host glycan. The N-linked (GlcNAc...) asparagine; by host glycan is linked to Asn-198. The BetaCoV S1-CTD domain occupies Pro-329–Thr-617. N-linked (GlcNAc...) asparagine; by host glycosylation is present at Asn-359. 2 disulfides stabilise this stretch: Cys-374/Cys-427 and Cys-386/Cys-615. Residues Asn-437, Asn-649, Asn-676, Asn-696, Asn-714, Asn-739, and Asn-788 are each glycosylated (N-linked (GlcNAc...) asparagine; by host). Fusion peptide regions lie at residues Ser-914–Tyr-935 and Glu-933–Tyr-953. N-linked (GlcNAc...) asparagine; by host glycosylation is present at Asn-937. Cysteines 938 and 949 form a disulfide. A heptad repeat 1 region spans residues Gln-1014–Phe-1064. The stretch at Gln-1043–Ile-1087 forms a coiled coil. Residues Asn-1194, Asn-1224, Asn-1234, Asn-1253, Asn-1267, and Asn-1288 are each glycosylated (N-linked (GlcNAc...) asparagine; by host). A heptad repeat 2 region spans residues Ala-1258–Asp-1296. The stretch at Thr-1269–Ile-1297 forms a coiled coil. The helical transmembrane segment at Trp-1308–Ile-1328 threads the bilayer. The Cytoplasmic segment spans residues Cys-1329 to Asp-1363. Residues Thr-1359 to Asp-1363 carry the KxHxx motif.

This sequence belongs to the betacoronaviruses spike protein family. In terms of assembly, homotrimer; each monomer consists of a S1 and a S2 subunit. The resulting peplomers protrude from the virus surface as spikes. Specific enzymatic cleavages in vivo yield mature proteins. The precursor is processed into S1 and S2 by host cell furin or another cellular protease to yield the mature S1 and S2 proteins. Additionally, a second cleavage leads to the release of a fusion peptide after viral attachment to host cell receptor. Post-translationally, the cytoplasmic Cys-rich domain is palmitoylated. Spike glycoprotein is digested within host endosomes.

Its subcellular location is the virion membrane. It localises to the host endoplasmic reticulum-Golgi intermediate compartment membrane. It is found in the host cell membrane. Its function is as follows. Attaches the virion to the cell membrane by interacting with host receptor, initiating the infection. Mediates fusion of the virion and cellular membranes by acting as a class I viral fusion protein. Under the current model, the protein has at least three conformational states: pre-fusion native state, pre-hairpin intermediate state, and post-fusion hairpin state. During viral and target cell membrane fusion, the coiled coil regions (heptad repeats) assume a trimer-of-hairpins structure, positioning the fusion peptide in close proximity to the C-terminal region of the ectodomain. The formation of this structure appears to drive apposition and subsequent fusion of viral and target cell membranes. Functionally, acts as a viral fusion peptide which is unmasked following S2 cleavage occurring upon virus endocytosis. This Bovine coronavirus (strain LSU-94LSS-051) (BCoV-LSU) protein is Spike glycoprotein.